Consider the following 279-residue polypeptide: Putative pyruvate, phosphate dikinase regulatory protein (279 aa).

Position 153-160 (153-160 (GISRTSKT)) interacts with ADP.

It belongs to the pyruvate, phosphate/water dikinase regulatory protein family. PDRP subfamily.

The enzyme catalyses N(tele)-phospho-L-histidyl/L-threonyl-[pyruvate, phosphate dikinase] + ADP = N(tele)-phospho-L-histidyl/O-phospho-L-threonyl-[pyruvate, phosphate dikinase] + AMP + H(+). It catalyses the reaction N(tele)-phospho-L-histidyl/O-phospho-L-threonyl-[pyruvate, phosphate dikinase] + phosphate + H(+) = N(tele)-phospho-L-histidyl/L-threonyl-[pyruvate, phosphate dikinase] + diphosphate. Bifunctional serine/threonine kinase and phosphorylase involved in the regulation of the pyruvate, phosphate dikinase (PPDK) by catalyzing its phosphorylation/dephosphorylation. In Bartonella bacilliformis (strain ATCC 35685 / KC583 / Herrer 020/F12,63), this protein is Putative pyruvate, phosphate dikinase regulatory protein.